The chain runs to 170 residues: ATP synthase subunit b (170 aa).

The chain crosses the membrane as a helical span at residues 15-37 (LNLFETNVLNWAVVVFGLYKFLP).

Belongs to the ATPase B chain family. F-type ATPases have 2 components, F(1) - the catalytic core - and F(0) - the membrane proton channel. F(1) has five subunits: alpha(3), beta(3), gamma(1), delta(1), epsilon(1). F(0) has four main subunits: a(1), b(1), b'(1) and c(10-14). The alpha and beta chains form an alternating ring which encloses part of the gamma chain. F(1) is attached to F(0) by a central stalk formed by the gamma and epsilon chains, while a peripheral stalk is formed by the delta, b and b' chains.

The protein resides in the cellular thylakoid membrane. F(1)F(0) ATP synthase produces ATP from ADP in the presence of a proton or sodium gradient. F-type ATPases consist of two structural domains, F(1) containing the extramembraneous catalytic core and F(0) containing the membrane proton channel, linked together by a central stalk and a peripheral stalk. During catalysis, ATP synthesis in the catalytic domain of F(1) is coupled via a rotary mechanism of the central stalk subunits to proton translocation. Its function is as follows. Component of the F(0) channel, it forms part of the peripheral stalk, linking F(1) to F(0). The chain is ATP synthase subunit b from Prochlorococcus marinus (strain MIT 9515).